The primary structure comprises 83 residues: RNA-binding protein Hfq (83 aa).

The 61-residue stretch at 10–70 (DAFLNQLRKE…ISTVSPSRPV (61 aa)) folds into the Sm domain.

This sequence belongs to the Hfq family. In terms of assembly, homohexamer.

Functionally, RNA chaperone that binds small regulatory RNA (sRNAs) and mRNAs to facilitate mRNA translational regulation in response to envelope stress, environmental stress and changes in metabolite concentrations. Also binds with high specificity to tRNAs. This chain is RNA-binding protein Hfq, found in Desulforudis audaxviator (strain MP104C).